We begin with the raw amino-acid sequence, 591 residues long: V-type ATP synthase alpha chain (591 aa).

An ATP-binding site is contributed by 231-238 (GPFGSGKT).

Belongs to the ATPase alpha/beta chains family.

The enzyme catalyses ATP + H2O + 4 H(+)(in) = ADP + phosphate + 5 H(+)(out). In terms of biological role, produces ATP from ADP in the presence of a proton gradient across the membrane. The V-type alpha chain is a catalytic subunit. The chain is V-type ATP synthase alpha chain from Clostridium novyi (strain NT).